Reading from the N-terminus, the 242-residue chain is HTH-type transcriptional regulator GadW (242 aa).

The HTH araC/xylS-type domain occupies 139–236 (GKVERLISFD…GVTPHQFAQH (98 aa)). 2 consecutive DNA-binding regions (H-T-H motif) follow at residues 156–177 (RDIAERMYTSESLIKKKLQDEN) and 203–226 (LHTIAEKCGYSSTSYFINTFRQYY).

As to quaternary structure, homodimer.

In terms of biological role, depending on the conditions (growth phase and medium), acts as a positive or negative regulator of gadA and gadBC. Repression occurs directly or via the repression of the expression of gadX. Activation occurs directly by the binding of GadW to the gadA and gadBC promoters. This is HTH-type transcriptional regulator GadW (gadW) from Escherichia coli (strain K12).